Consider the following 212-residue polypeptide: ATP phosphoribosyltransferase (212 aa).

Belongs to the ATP phosphoribosyltransferase family. Short subfamily. In terms of assembly, heteromultimer composed of HisG and HisZ subunits.

It is found in the cytoplasm. It catalyses the reaction 1-(5-phospho-beta-D-ribosyl)-ATP + diphosphate = 5-phospho-alpha-D-ribose 1-diphosphate + ATP. Its pathway is amino-acid biosynthesis; L-histidine biosynthesis; L-histidine from 5-phospho-alpha-D-ribose 1-diphosphate: step 1/9. Catalyzes the condensation of ATP and 5-phosphoribose 1-diphosphate to form N'-(5'-phosphoribosyl)-ATP (PR-ATP). Has a crucial role in the pathway because the rate of histidine biosynthesis seems to be controlled primarily by regulation of HisG enzymatic activity. The sequence is that of ATP phosphoribosyltransferase from Prochlorococcus marinus (strain MIT 9301).